Consider the following 128-residue polypeptide: Glycine cleavage system H protein (128 aa).

One can recognise a Lipoyl-binding domain in the interval 24–106 (LVRIGISEFA…HGEGWLLIIR (83 aa)). Position 65 is an N6-lipoyllysine (lysine 65).

It belongs to the GcvH family. In terms of assembly, the glycine cleavage system is composed of four proteins: P, T, L and H. It depends on (R)-lipoate as a cofactor.

Functionally, the glycine cleavage system catalyzes the degradation of glycine. The H protein shuttles the methylamine group of glycine from the P protein to the T protein. This Prochlorococcus marinus (strain NATL1A) protein is Glycine cleavage system H protein.